Here is a 223-residue protein sequence, read N- to C-terminus: ATP-dependent Clp protease proteolytic subunit 2 (223 aa).

Positions 1-40 are disordered; the sequence is MHAGSGNDMDITRMTPTRLDDEPDAPEPETREDDNKTLNS. Acidic residues predominate over residues 21–32; it reads DEPDAPEPETRE. Serine 124 (nucleophile) is an active-site residue. Residue histidine 149 is part of the active site.

The protein belongs to the peptidase S14 family. As to quaternary structure, fourteen ClpP subunits assemble into 2 heptameric rings which stack back to back to give a disk-like structure with a central cavity, resembling the structure of eukaryotic proteasomes.

It is found in the cytoplasm. It carries out the reaction Hydrolysis of proteins to small peptides in the presence of ATP and magnesium. alpha-casein is the usual test substrate. In the absence of ATP, only oligopeptides shorter than five residues are hydrolyzed (such as succinyl-Leu-Tyr-|-NHMec, and Leu-Tyr-Leu-|-Tyr-Trp, in which cleavage of the -Tyr-|-Leu- and -Tyr-|-Trp bonds also occurs).. Cleaves peptides in various proteins in a process that requires ATP hydrolysis. Has a chymotrypsin-like activity. Plays a major role in the degradation of misfolded proteins. The protein is ATP-dependent Clp protease proteolytic subunit 2 of Gluconobacter oxydans (strain 621H) (Gluconobacter suboxydans).